The sequence spans 345 residues: Glycerol-3-phosphate dehydrogenase [NAD(P)+] (345 aa).

The NADPH site is built by Ser-11, Trp-12, His-32, Arg-33, and Lys-106. Residues Lys-106, Gly-137, and Ser-139 each coordinate sn-glycerol 3-phosphate. An NADPH-binding site is contributed by Ala-141. The sn-glycerol 3-phosphate site is built by Lys-192, Asp-245, Ser-255, Arg-256, and Asn-257. Lys-192 serves as the catalytic Proton acceptor. Arg-256 serves as a coordination point for NADPH. The NADPH site is built by Val-280 and Glu-282.

Belongs to the NAD-dependent glycerol-3-phosphate dehydrogenase family.

It is found in the cytoplasm. The enzyme catalyses sn-glycerol 3-phosphate + NAD(+) = dihydroxyacetone phosphate + NADH + H(+). The catalysed reaction is sn-glycerol 3-phosphate + NADP(+) = dihydroxyacetone phosphate + NADPH + H(+). Its pathway is membrane lipid metabolism; glycerophospholipid metabolism. Catalyzes the reduction of the glycolytic intermediate dihydroxyacetone phosphate (DHAP) to sn-glycerol 3-phosphate (G3P), the key precursor for phospholipid synthesis. This Bacillus velezensis (strain DSM 23117 / BGSC 10A6 / LMG 26770 / FZB42) (Bacillus amyloliquefaciens subsp. plantarum) protein is Glycerol-3-phosphate dehydrogenase [NAD(P)+].